The sequence spans 331 residues: 5,10-methylenetetrahydromethanopterin reductase (331 aa).

The protein belongs to the mer family.

The protein resides in the cytoplasm. It carries out the reaction 5-methyl-5,6,7,8-tetrahydromethanopterin + oxidized coenzyme F420-(gamma-L-Glu)(n) + H(+) = 5,10-methylenetetrahydromethanopterin + reduced coenzyme F420-(gamma-L-Glu)(n). It participates in one-carbon metabolism; methanogenesis from CO(2); methyl-coenzyme M from 5,10-methylene-5,6,7,8-tetrahydromethanopterin: step 1/2. Its function is as follows. Catalyzes the reversible reduction of methylene-H(4)MPT to methyl-H(4)MPT. The sequence is that of 5,10-methylenetetrahydromethanopterin reductase from Methanocaldococcus jannaschii (strain ATCC 43067 / DSM 2661 / JAL-1 / JCM 10045 / NBRC 100440) (Methanococcus jannaschii).